The primary structure comprises 251 residues: 2-amino-5-chloromuconate deaminase (251 aa).

In terms of assembly, monomer.

The enzyme catalyses (2Z,4E)-2-aminomuconate + H2O = (2Z,4E)-2-hydroxyhexa-2,4-dienedioate + NH4(+). The protein operates within xenobiotic degradation; 4-chloronitrobenzene degradation. Its pathway is xenobiotic degradation; nitrobenzene degradation. With respect to regulation, cysteine residue modifying agents such as p-chloromercuribenzoate and the SH-binding metals Zn(2+), Ni(2+) and Cu(2+) completely inhibit deaminase activity, whereas Ca(2+), Mg(2+) and the histidine residue-modifying agent diethyl pyrocarbonate inhibit the activity by 23 to 50%. In terms of biological role, involved in the biodegradation of xenobiotic compounds, such as nitrobenzene and 4-chloronitrobenzene (4-CNB). CnbZ preferentially catalyzes the deamination of 2-amino-5-chloromuconate (2A5CM) to yield 2-hydroxy-5-chloromuconate (2H5CM). Also able to catalyze the deamination of 2-aminomuconate to yield 2-hydroxymuconate, which spontaneously converts into its keto form, 2-oxalocrotonate. The chain is 2-amino-5-chloromuconate deaminase from Comamonas testosteroni (Pseudomonas testosteroni).